We begin with the raw amino-acid sequence, 643 residues long: Alpha-dioxygenase PIOX (643 aa).

The Proton acceptor role is filled by histidine 167. Aspartate 168 contacts Ca(2+). Histidine 172 serves as a coordination point for heme b. Positions 220, 222, 224, and 226 each coordinate Ca(2+). The heme b site is built by histidine 392, arginine 489, and arginine 493.

It belongs to the peroxidase family. The cofactor is heme b. It depends on Ca(2+) as a cofactor.

The enzyme catalyses a 1,2-saturated fatty acid + O2 = a (2R)-2-hydroperoxy fatty acid. The catalysed reaction is (9Z,12Z,15Z)-octadecatrienoate + O2 = (R)-2-hydroperoxy-(9Z,12Z,15Z)-octadecatrienoate. It catalyses the reaction (9Z,12Z)-octadecadienoate + O2 = (2R,9Z,12Z)-2-hydroperoxyoctadecadienoate. In terms of biological role, alpha-dioxygenase that catalyzes the primary oxygenation step of a variety of 14-20 carbon fatty acids, containing up to three unsaturated bonds, into their corresponding 2R-hydroperoxides. Involved in the production of oxylipins that function in cell signaling, wound healing, and protection from infection. The chain is Alpha-dioxygenase PIOX from Nicotiana tabacum (Common tobacco).